A 318-amino-acid polypeptide reads, in one-letter code: Malonyl-S-ACP:biotin-protein carboxyltransferase MADC (318 aa).

The 256-residue stretch at 2–257 (AKWTELQDKS…VLQKPMEEIE (256 aa)) folds into the CoA carboxyltransferase N-terminal domain.

The protein localises to the cytoplasm. The enzyme catalyses N(6)-biotinyl-L-lysyl-[protein] + malonyl-[ACP] = N(6)-carboxybiotinyl-L-lysyl-[protein] + acetyl-[ACP]. Gamma subunit of the biotin-dependent malonate decarboxylase multienzyme complex (EC 7.2.4.4). The two subunits MADC and MADD are required for the transfer of the malonate carboxy group from the acyl-carrier protein (ACP) to the prosthetic group of the biotin carrier MADF. Required for the regeneration of ACP. In Malonomonas rubra, this protein is Malonyl-S-ACP:biotin-protein carboxyltransferase MADC (madC).